A 459-amino-acid chain; its full sequence is MKLLVVSNRLPLTVKKSKDGFEYTKTSGGLVTGLRGISDKIRFMWLGNISGVELDEEEKKVIRKDCWEKFHSIPVFIDPVLNSNSYDGFCNAILWPIIHSFKDDVAFTIKDYNAYVEYNTIFCEEICKIVEDGDIVWVHDYHLMILPEMLRKKSDKSFKIMFFLHAQFPPAEIMETLACRREIVSGMAHSDLIAFHSFDYAINFDDTCRANKVEVRSKLDAIPIGIDPAMFRSALKEEKTVERIKELREMFRGRKILLGVDRTDYIKGMPHRVKGFQRFLEKHPEFLDNVVFLQVGVPSRTSVKEYSSYITKMNELVSETNSKFGSIESVHLYFLNKSVDFNELCALYAVSDMLLVTSLQDGMNLVALEYISCQNENNGVLLLSSNAGASTTLPAAVEVNSWNTEEIADGIHRAITMSLEERTERHEINRKAVDTFTSVEWAEKNLDGLCDDWRESLML.

Positions 86 and 140 each coordinate D-glucose 6-phosphate. Arginine 262 and lysine 267 together coordinate UDP. Arginine 262 and lysine 267 together coordinate UDP-alpha-D-glucose. Arginine 300 is a binding site for D-glucose 6-phosphate. 361–369 (DGMNLVALE) provides a ligand contact to UDP-alpha-D-glucose. 365-369 (LVALE) provides a ligand contact to UDP.

Belongs to the glycosyltransferase 20 family. In terms of assembly, component of the trehalose synthase complex.

It localises to the cytoplasm. The enzyme catalyses D-glucose 6-phosphate + UDP-alpha-D-glucose = alpha,alpha-trehalose 6-phosphate + UDP + H(+). Functionally, synthase catalytic subunit of the trehalose synthase complex that catalyzes the production of trehalose from glucose-6-phosphate and UDP-alpha-D-glucose in a two step process. Can function independently of the complex. The chain is Alpha,alpha-trehalose-phosphate synthase [UDP-forming] (TPS1) from Encephalitozoon cuniculi (strain GB-M1) (Microsporidian parasite).